Reading from the N-terminus, the 283-residue chain is Nopaline-binding periplasmic protein (283 aa).

The N-terminal stretch at 1-25 is a signal peptide; sequence MKFFNLNALAAVVTGVLLAAGPTQA. Cys63 and Cys70 form a disulfide bridge.

This sequence belongs to the bacterial solute-binding protein 3 family.

It localises to the periplasm. Functionally, component of the nopaline active transport system probably consisting of four subunits: Q, M, P and T. This system is also capable of transporting octopine provided that catabolic functions are induced with nopaline. The chain is Nopaline-binding periplasmic protein (nocT) from Agrobacterium fabrum (strain C58 / ATCC 33970) (Agrobacterium tumefaciens (strain C58)).